Consider the following 838-residue polypeptide: Ribonucleoside-diphosphate reductase large subunit (838 aa).

The ATP-cone domain occupies 6 to 97 (KLVTKRDGSV…VTALHKTTTE (92 aa)). ATP contacts are provided by residues 10–11 (KR), 16–22 (EPYDEKV), T58, and D62. GDP is bound at residue S227. C228 and C454 are oxidised to a cystine. Residues 236–238 (DSI), K253, R266, and 273–274 (AG) contribute to the dTTP site. N437 provides a ligand contact to GDP. The active-site Proton acceptor is the N437. The active-site Cysteine radical intermediate is the C439. Residues E441 and 626-629 (TAST) each bind GDP. E441 (proton acceptor) is an active-site residue. A compositionally biased stretch (basic and acidic residues) spans 780–794 (KELPKPDKQSKEEVH). The segment at 780-838 (KELPKPDKQSKEEVHGSVGRGKRKRVGEKPTANHSNAGAPNLNGPPDTDGDGGCLNCGS) is disordered.

Belongs to the ribonucleoside diphosphate reductase large chain family. Heterodimer of a large and a small subunit.

The enzyme catalyses a 2'-deoxyribonucleoside 5'-diphosphate + [thioredoxin]-disulfide + H2O = a ribonucleoside 5'-diphosphate + [thioredoxin]-dithiol. It catalyses the reaction dCDP + [thioredoxin]-disulfide + H2O = CDP + [thioredoxin]-dithiol. Under complex allosteric control mediated by deoxynucleoside triphosphates and ATP binding to separate specificity and activation sites on the large subunit. The type of nucleotide bound at the specificity site determines substrate preference. It seems probable that ATP makes the enzyme reduce CDP and UDP, dGTP favors ADP reduction and dTTP favors GDP reduction. Stimulated by ATP and inhibited by dATP binding to the activity site. Functionally, provides the precursors necessary for DNA synthesis. Catalyzes the rate limiting step in the de novo synthesis of deoxyribonucleotides by directly reducing ribonucleotides to the corresponding deoxyribonucleotides. The polypeptide is Ribonucleoside-diphosphate reductase large subunit (RNR1) (Trypanosoma brucei brucei).